The primary structure comprises 294 residues: Glycine--tRNA ligase alpha subunit (294 aa).

This sequence belongs to the class-II aminoacyl-tRNA synthetase family. In terms of assembly, tetramer of two alpha and two beta subunits.

The protein localises to the cytoplasm. The enzyme catalyses tRNA(Gly) + glycine + ATP = glycyl-tRNA(Gly) + AMP + diphosphate. The sequence is that of Glycine--tRNA ligase alpha subunit from Trichormus variabilis (strain ATCC 29413 / PCC 7937) (Anabaena variabilis).